Here is a 325-residue protein sequence, read N- to C-terminus: GMP reductase (325 aa).

The active-site Thioimidate intermediate is Cys173. 202 to 225 (IIADGGIRSHGDIAKSVRFGATMV) contributes to the NADP(+) binding site.

It belongs to the IMPDH/GMPR family. GuaC type 2 subfamily.

The enzyme catalyses IMP + NH4(+) + NADP(+) = GMP + NADPH + 2 H(+). Functionally, catalyzes the irreversible NADPH-dependent deamination of GMP to IMP. It functions in the conversion of nucleobase, nucleoside and nucleotide derivatives of G to A nucleotides, and in maintaining the intracellular balance of A and G nucleotides. This Acidovorax ebreus (strain TPSY) (Diaphorobacter sp. (strain TPSY)) protein is GMP reductase.